We begin with the raw amino-acid sequence, 188 residues long: Large ribosomal subunit protein eL18 (188 aa).

Lys-119 participates in a covalent cross-link: Glycyl lysine isopeptide (Lys-Gly) (interchain with G-Cter in SUMO2). Ser-130 carries the phosphoserine modification. The segment at 150–188 is disordered; it reads RHFGKAPGTPHSHTKPYVRSKGRKFERARGRRASRGYKN. Thr-158 carries the post-translational modification Phosphothreonine. Basic residues-rich tracts occupy residues 161-171 and 178-188; these read SHTKPYVRSKG and RGRRASRGYKN. A Glycyl lysine isopeptide (Lys-Gly) (interchain with G-Cter in SUMO2) cross-link involves residue Lys-164.

It belongs to the eukaryotic ribosomal protein eL18 family. In terms of assembly, component of the large ribosomal subunit.

Its subcellular location is the cytoplasm. The protein localises to the cytosol. The protein resides in the rough endoplasmic reticulum. Functionally, component of the large ribosomal subunit. The ribosome is a large ribonucleoprotein complex responsible for the synthesis of proteins in the cell. In Bos taurus (Bovine), this protein is Large ribosomal subunit protein eL18 (RPL18).